A 512-amino-acid polypeptide reads, in one-letter code: Protein singed (512 aa).

This sequence belongs to the fascin family. As to quaternary structure, interacts with Rab35, with stronger binding to the Rab35-GTP form compared to the Rab35-GDP form.

It is found in the cytoplasm. The protein resides in the cytoskeleton. Acts as an actin bundling protein. May have a role in the asymmetric organization and/or movement of cytoplasmic components. It has a role in somatic cells during the formation of adult bristles and hairs, and in the female germline during oogenesis. In Drosophila melanogaster (Fruit fly), this protein is Protein singed (sn).